The primary structure comprises 501 residues: Carboxypeptidase 1 (501 aa).

The 494-residue stretch at 3–496 folds into the Peptidase M32 domain; it reads IHTYEKEFFD…LIDYLSNKYS (494 aa). Residues 234-236 carry the HPF motif; it reads HPF. The short motif at 244–248 is the DXRXT element; that stretch reads DVRVT. H265 serves as a coordination point for Zn(2+). An HEXXH motif is present at residues 265-269; that stretch reads HECGH. The active-site Proton donor/acceptor is E266. Residues H269 and E295 each coordinate Zn(2+). Positions 294-297 match the HES/GQ motif; the sequence is HESQ. The I/NRXXA/SD motif lies at 347-352; that stretch reads IRVEAD. The GXXQDXHW signature appears at 402–409; it reads GILQDVHW.

Belongs to the peptidase M32 family. Homodimer. Zn(2+) is required as a cofactor.

The enzyme catalyses Release of a C-terminal amino acid with broad specificity, except for -Pro.. In terms of biological role, broad specificity carboxypetidase that releases amino acids sequentially from the C-terminus, including neutral, aromatic, polar and basic residues. Has lower activity with substrates ending with His or Trp. The chain is Carboxypeptidase 1 (ypwA) from Bacillus subtilis (strain 168).